A 338-amino-acid polypeptide reads, in one-letter code: Fructose-1,6-bisphosphatase 1 (338 aa).

At Thr-2 the chain carries N-acetylthreonine. Residues 18-22 and 28-32 each bind AMP; these read VMEEG and TGEMT. Mg(2+) contacts are provided by Asp-69 and Glu-98. Residue 113–114 coordinates AMP; the sequence is KY. Mg(2+) is bound by residues Asp-119, Leu-121, and Asp-122. 122-125 provides a ligand contact to substrate; that stretch reads DGSS. An AMP-binding site is contributed by Lys-141. N6-succinyllysine is present on Lys-151. Phosphoserine is present on Ser-208. Residues 213 to 216, 244 to 249, Tyr-265, and 275 to 277 contribute to the substrate site; these read NEGY, RYVGSM, and KLR. Phosphotyrosine is present on residues Tyr-216, Tyr-245, and Tyr-265. Glu-281 contributes to the Mg(2+) binding site.

Belongs to the FBPase class 1 family. As to quaternary structure, homotetramer. Mg(2+) serves as cofactor.

It carries out the reaction beta-D-fructose 1,6-bisphosphate + H2O = beta-D-fructose 6-phosphate + phosphate. The protein operates within carbohydrate biosynthesis; gluconeogenesis. Subject to complex allosteric regulation. The enzyme can assume an active R-state, or an inactive T-state. Intermediate conformations may exist. AMP acts as an allosteric inhibitor. AMP binding affects the turnover of bound substrate and not the affinity for substrate. Fructose 2,6-bisphosphate acts as a competitive inhibitor. Fructose 2,6-bisphosphate and AMP have synergistic effects. In terms of biological role, catalyzes the hydrolysis of fructose 1,6-bisphosphate to fructose 6-phosphate in the presence of divalent cations, acting as a rate-limiting enzyme in gluconeogenesis. Plays a role in regulating glucose sensing and insulin secretion of pancreatic beta-cells. Appears to modulate glycerol gluconeogenesis in liver. Important regulator of appetite and adiposity; increased expression of the protein in liver after nutrient excess increases circulating satiety hormones and reduces appetite-stimulating neuropeptides and thus seems to provide a feedback mechanism to limit weight gain. This Bos taurus (Bovine) protein is Fructose-1,6-bisphosphatase 1 (FBP1).